The following is a 206-amino-acid chain: Large ribosomal subunit protein mL40 (206 aa).

Residues 1 to 46 (MTASVLRSISLALRPTSGLLGTWQTQLRETHQRASLLSFWELIPMR) constitute a mitochondrion transit peptide. Positions 168–192 (LFPFEKEGPHYTPPIPNYQPPEGRY) are disordered.

It belongs to the mitochondrion-specific ribosomal protein mL40 family. In terms of assembly, component of the mitochondrial large ribosomal subunit (mt-LSU). Mature mammalian 55S mitochondrial ribosomes consist of a small (28S) and a large (39S) subunit. The 28S small subunit contains a 12S ribosomal RNA (12S mt-rRNA) and 30 different proteins. The 39S large subunit contains a 16S rRNA (16S mt-rRNA), a copy of mitochondrial valine transfer RNA (mt-tRNA(Val)), which plays an integral structural role, and 52 different proteins. mL40 binds to the major groove of the anticodon stem of mt-tRNA(Val) in the central protuberance. As to expression, ubiquitous.

It is found in the mitochondrion. This Homo sapiens (Human) protein is Large ribosomal subunit protein mL40 (MRPL40).